The sequence spans 149 residues: 3-dehydroquinate dehydratase (149 aa).

Catalysis depends on Y26, which acts as the Proton acceptor. Substrate is bound by residues N77, H83, and D90. Catalysis depends on H103, which acts as the Proton donor. Substrate is bound by residues 104–105 and R114; that span reads LS.

It belongs to the type-II 3-dehydroquinase family. As to quaternary structure, homododecamer.

It catalyses the reaction 3-dehydroquinate = 3-dehydroshikimate + H2O. Its pathway is metabolic intermediate biosynthesis; chorismate biosynthesis; chorismate from D-erythrose 4-phosphate and phosphoenolpyruvate: step 3/7. Its function is as follows. Catalyzes a trans-dehydration via an enolate intermediate. This is 3-dehydroquinate dehydratase from Haemophilus influenzae (strain PittEE).